Here is an 877-residue protein sequence, read N- to C-terminus: Polycomb protein Scm (877 aa).

The disordered stretch occupies residues 1-57; the sequence is MSGGRDSSTSSGSNSAAPGASTNATSSASASASSTSTSASPGSTTSPASTQRQRGRP. Residues 7–50 are compositionally biased toward low complexity; sequence SSTSSGSNSAAPGASTNATSSASASASSTSTSASPGSTTSPAST. The segment at 54 to 93 adopts an FCS-type zinc-finger fold; sequence RGRPAKRATCTWCGEGKLPLQYVLPTQTGKKEFCSETCIA. Zn(2+)-binding residues include cysteine 63, cysteine 66, cysteine 87, and cysteine 91. MBT repeat units follow at residues 175–273 and 281–382; these read FDWD…LQPP and SSWP…MQPP. 3 disordered regions span residues 535–621, 652–692, and 713–735; these read NSRK…SNKV, TNTN…GGSA, and ANVKPSNSYYKSPTTLSSSASLP. Threonine 546 is modified (phosphothreonine). 2 positions are modified to phosphoserine: serine 549 and serine 550. The segment covering 560–569 has biased composition (polar residues); it reads QSNSATTSPS. At serine 585 the chain carries Phosphoserine. A compositionally biased stretch (low complexity) spans 598-620; it reads ASQQNSNHSLNNNNNSASKSSNK. A compositionally biased stretch (low complexity) spans 724 to 735; that stretch reads SPTTLSSSASLP. In terms of domain architecture, SAM spans 806–876; the sequence is WTIEEVIQYI…KVNGRRNNLA (71 aa).

The protein belongs to the SCM family. Scm associates with the PRC1 core complex containing PSC, PC, PH and Sce/RING1. Forms homotypic and heterotypic interactions. Interacts with the SAM domain of ph-p via its SAM domain in vitro. Interacts with corto in vitro.

It localises to the nucleus. Polycomb group (PcG) protein. PcG proteins act by forming multiprotein complexes, which are required to maintain the transcriptionally repressive state of homeotic genes throughout development. PcG proteins are not required to initiate repression, but to maintain it during later stages of development. They probably act via the methylation of histones, rendering chromatin heritably changed in its expressibility. In Drosophila melanogaster (Fruit fly), this protein is Polycomb protein Scm.